The following is a 57-amino-acid chain: MPHYVVVKSPMRRRRSPRRRSPRVCYSPRRVACSPRRRSPRRRSPRRRSPRRSIVVY.

Residues 1–57 (MPHYVVVKSPMRRRRSPRRRSPRVCYSPRRVACSPRRRSPRRRSPRRRSPRRSIVVY) are disordered. Positions 10–22 (PMRRRRSPRRRSP) are enriched in basic residues. Positions 23 to 34 (RVCYSPRRVACS) are enriched in low complexity. Basic residues predominate over residues 35–51 (PRRRSPRRRSPRRRSPR).

This is an uncharacterized protein from Acheta domesticus (House cricket).